The primary structure comprises 426 residues: Actin-like protein 6B (426 aa).

The tract at residues 39–82 is essential for mediating its function in dendritic development; may contribute to neuronal-specific targeting; sequence TTVGLLAAEEGGGLELEGDKEKKGKIFHIDTNALHVPRDGAEVM.

This sequence belongs to the actin family. Component of the multiprotein chromatin-remodeling complexes SWI/SNF: SWI/SNF-A (BAF), SWI/SNF-B (PBAF) and related complexes. The canonical complex contains a catalytic subunit (either SMARCA4/BRG1/BAF190A or SMARCA2/BRM/BAF190B) and at least SMARCE1, ACTL6A/BAF53, SMARCC1/BAF155, SMARCC2/BAF170 and SMARCB1/SNF5/BAF47. Other subunits specific to each of the complexes may also be present permitting several possible combinations developmentally and tissue specific. Component of the BAF complex, which includes at least actin (ACTB), ARID1A/BAF250A, ARID1B/BAF250B, SMARCA2/BRM, SMARCA4/BRG1/BAF190A, ACTL6A/BAF53, ACTL6B/BAF53B, SMARCE1/BAF57, SMARCC1/BAF155, SMARCC2/BAF170, SMARCB1/SNF5/INI1 and one or more SMARCD1/BAF60A, SMARCD2/BAF60B, or SMARCD3/BAF60C. Component of neuron-specific chromatin remodeling complex (nBAF complex) composed of at least, ARID1A/BAF250A or ARID1B/BAF250B, SMARCD1/BAF60A or SMARCD2/BAF60B or SMARCD3/BAF60C, SMARCA2/BRM/BAF190B, SMARCA4/BRG1/BAF190A, SMARCB1/BAF47, SMARCC1/BAF155, SMARCE1/BAF57, SMARCC2/BAF170, DPF1/BAF45B, DPF3/BAF45C, ACTL6B/BAF53B and actin (ACTB). Note that the nBAF complex is polymorphic in regard to the ATPase, SMARCA2 and SMARCA4 occupying mutually exclusive positions. May be a component of the SWI/SNF-B (PBAF) chromatin remodeling complex, at least composed of SMARCA4/BRG1, SMARCB1/BAF47/SNF5, ACTL6A/BAF53A or ACTL6B/BAF53B, SMARCE1/BAF57, SMARCD1/BAF60A, SMARCD2/BAF60B, perhaps SMARCD3/BAF60C, SMARCC1/BAF155, SMARCC2/BAF170, PBRM1/BAF180, ARID2/BAF200 and actin.

It localises to the nucleus. In terms of biological role, involved in transcriptional activation and repression of select genes by chromatin remodeling (alteration of DNA-nucleosome topology). Component of SWI/SNF chromatin remodeling complexes that carry out key enzymatic activities, changing chromatin structure by altering DNA-histone contacts within a nucleosome in an ATP-dependent manner. Belongs to the neuron-specific chromatin remodeling complex (nBAF complex), as such plays a role in remodeling mononucleosomes in an ATP-dependent fashion, and is required for postmitotic neural development and dendritic outgrowth. During neural development a switch from a stem/progenitor to a postmitotic chromatin remodeling mechanism occurs as neurons exit the cell cycle and become committed to their adult state. The transition from proliferating neural stem/progenitor cells to postmitotic neurons requires a switch in subunit composition of the npBAF and nBAF complexes. As neural progenitors exit mitosis and differentiate into neurons, npBAF complexes which contain ACTL6A/BAF53A and PHF10/BAF45A, are exchanged for homologous alternative ACTL6B/BAF53B and DPF1/BAF45B or DPF3/BAF45C subunits in neuron-specific complexes (nBAF). The npBAF complex is essential for the self-renewal/proliferative capacity of the multipotent neural stem cells. The nBAF complex along with CREST plays a role regulating the activity of genes essential for dendrite growth. ACTL6B/BAF53B is not essential for assembly of the nBAF complex but is required for targeting the complex and CREST to the promoter of genes essential for dendritic growth. Essential for neuronal maturation and dendrite development. The protein is Actin-like protein 6B of Homo sapiens (Human).